A 145-amino-acid chain; its full sequence is Large ribosomal subunit protein bL19 (145 aa).

Residues Ile-114–Ala-136 are compositionally biased toward basic and acidic residues. Residues Ile-114 to Glu-145 form a disordered region.

The protein belongs to the bacterial ribosomal protein bL19 family.

Functionally, this protein is located at the 30S-50S ribosomal subunit interface and may play a role in the structure and function of the aminoacyl-tRNA binding site. This is Large ribosomal subunit protein bL19 from Methylocella silvestris (strain DSM 15510 / CIP 108128 / LMG 27833 / NCIMB 13906 / BL2).